The sequence spans 315 residues: Methionyl-tRNA formyltransferase (315 aa).

113–116 serves as a coordination point for (6S)-5,6,7,8-tetrahydrofolate; sequence SILP.

The protein belongs to the Fmt family.

It catalyses the reaction L-methionyl-tRNA(fMet) + (6R)-10-formyltetrahydrofolate = N-formyl-L-methionyl-tRNA(fMet) + (6S)-5,6,7,8-tetrahydrofolate + H(+). In terms of biological role, attaches a formyl group to the free amino group of methionyl-tRNA(fMet). The formyl group appears to play a dual role in the initiator identity of N-formylmethionyl-tRNA by promoting its recognition by IF2 and preventing the misappropriation of this tRNA by the elongation apparatus. This Vibrio vulnificus (strain YJ016) protein is Methionyl-tRNA formyltransferase.